The following is a 172-amino-acid chain: Large ribosomal subunit protein uL10 (172 aa).

The protein belongs to the universal ribosomal protein uL10 family. As to quaternary structure, part of the ribosomal stalk of the 50S ribosomal subunit. The N-terminus interacts with L11 and the large rRNA to form the base of the stalk. The C-terminus forms an elongated spine to which L12 dimers bind in a sequential fashion forming a multimeric L10(L12)X complex.

Functionally, forms part of the ribosomal stalk, playing a central role in the interaction of the ribosome with GTP-bound translation factors. This is Large ribosomal subunit protein uL10 from Idiomarina loihiensis (strain ATCC BAA-735 / DSM 15497 / L2-TR).